A 100-amino-acid chain; its full sequence is Apolipoprotein C-II (100 aa).

The first 22 residues, 1–22 (MSSQFLLAFFLVLLVLGYEVQG), serve as a signal peptide directing secretion. Residues 66-74 (SVDEKLRDM) form a lipid binding region. The lipoprotein lipase cofactor stretch occupies residues 78–100 (SSAAMSTYAGIFTDQLFTLLKGE).

This sequence belongs to the apolipoprotein C2 family. Post-translationally, proapolipoprotein C-II is synthesized as a sialic acid containing glycoprotein which is subsequently desialylated prior to its proteolytic processing. In terms of processing, proapolipoprotein C-II, the major form found in plasma undergoes proteolytic cleavage of its N-terminal hexapeptide to generate the mature form apolipoprotein C-II, which occurs as the minor form in plasma.

It localises to the secreted. In terms of biological role, component of chylomicrons, very low-density lipoproteins (VLDL), low-density lipoproteins (LDL), and high-density lipoproteins (HDL) in plasma. Plays an important role in lipoprotein metabolism as an activator of lipoprotein lipase. The chain is Apolipoprotein C-II (APOC2) from Cricetulus griseus (Chinese hamster).